Here is a 178-residue protein sequence, read N- to C-terminus: MPVTKSLSKLQKNLSKKGKNITVHPKGRKYEKLVRATMREDKIAAKKKLHQDKRVHELARVKFMQDVVNSDTFKGQPIFDHAHTREFIQSFIERDDTELDELKKKRRSNRPPSNRQVLLQQRRDQELKEFKAGFLCPDLSDAKNMEFLRNWNGTFGLLNTLRLIRINDKGEQVVGGNE.

It belongs to the TMA16 family.

The protein localises to the nucleus. This is Translation machinery-associated protein 16 (TMA16) from Saccharomyces cerevisiae (strain ATCC 204508 / S288c) (Baker's yeast).